A 181-amino-acid chain; its full sequence is TATA-box-binding protein (181 aa).

2 tandem repeats follow at residues 8 to 84 and 99 to 175.

Belongs to the TBP family.

General factor that plays a role in the activation of archaeal genes transcribed by RNA polymerase. Binds specifically to the TATA box promoter element which lies close to the position of transcription initiation. The chain is TATA-box-binding protein from Methanobrevibacter smithii (strain ATCC 35061 / DSM 861 / OCM 144 / PS).